The sequence spans 320 residues: uncharacterized protein (320 aa).

The segment at 196–273 (VVPEYDFDSE…RSKNNSNTTK (78 aa)) is disordered. Positions 200 to 210 (YDFDSESESDN) are enriched in acidic residues. Residues 211-226 (SEEKRFVPVLETEKAP) are compositionally biased toward basic and acidic residues. The segment covering 248-273 (QPKNPKQTTLKNTLDTRSKNNSNTTK) has biased composition (polar residues).

This is an uncharacterized protein from Acanthamoeba polyphaga mimivirus (APMV).